Reading from the N-terminus, the 126-residue chain is Phosphoribosyl-AMP cyclohydrolase (126 aa).

D73 contributes to the Mg(2+) binding site. A Zn(2+)-binding site is contributed by C74. 2 residues coordinate Mg(2+): D75 and D77. C91 and C98 together coordinate Zn(2+).

This sequence belongs to the PRA-CH family. In terms of assembly, homodimer. It depends on Mg(2+) as a cofactor. Zn(2+) is required as a cofactor.

The protein localises to the cytoplasm. It catalyses the reaction 1-(5-phospho-beta-D-ribosyl)-5'-AMP + H2O = 1-(5-phospho-beta-D-ribosyl)-5-[(5-phospho-beta-D-ribosylamino)methylideneamino]imidazole-4-carboxamide. Its pathway is amino-acid biosynthesis; L-histidine biosynthesis; L-histidine from 5-phospho-alpha-D-ribose 1-diphosphate: step 3/9. In terms of biological role, catalyzes the hydrolysis of the adenine ring of phosphoribosyl-AMP. The protein is Phosphoribosyl-AMP cyclohydrolase of Solibacter usitatus (strain Ellin6076).